The sequence spans 313 residues: Tyrosine recombinase XerD (313 aa).

In terms of domain architecture, Core-binding (CB) spans 17–102 (EDNDVIIEQF…TLRRFFQYLY (86 aa)). The region spanning 123–307 (RLPKDLSEQQ…ATERLKVLHQ (185 aa)) is the Tyr recombinase domain. Active-site residues include Arg163, Lys187, His259, Arg262, and His285. Tyr294 acts as the O-(3'-phospho-DNA)-tyrosine intermediate in catalysis.

The protein belongs to the 'phage' integrase family. XerD subfamily. As to quaternary structure, forms a cyclic heterotetrameric complex composed of two molecules of XerC and two molecules of XerD, in which XerC interacts with XerD via its C-terminal region, XerD interacts with XerC via its C-terminal region and so on.

It is found in the cytoplasm. Its activity is regulated as follows. FtsK may regulate the catalytic switch between XerC and XerD in the heterotetrameric complex during the two steps of the recombination process. In terms of biological role, site-specific tyrosine recombinase, which acts by catalyzing the cutting and rejoining of the recombining DNA molecules. Binds cooperatively to specific DNA consensus sequences that are separated from XerC binding sites by a short central region, forming the heterotetrameric XerC-XerD complex that recombines DNA substrates. The complex is essential to convert dimers of the bacterial chromosome into monomers to permit their segregation at cell division. It also contributes to the segregational stability of plasmids. In the complex XerD specifically exchanges the bottom DNA strands. This chain is Tyrosine recombinase XerD, found in Proteus mirabilis.